Here is a 445-residue protein sequence, read N- to C-terminus: Tubby-like F-box protein 8 (445 aa).

The 47-residue stretch at 56–102 (ESRWASLPPELLRDVIRRLEASESTWPSRKDVVSCAAVCKAWREMCK) folds into the F-box domain.

The protein belongs to the TUB family. As to expression, ubiquitous.

In Oryza sativa subsp. japonica (Rice), this protein is Tubby-like F-box protein 8 (TULP8).